A 68-amino-acid chain; its full sequence is Large ribosomal subunit protein bL35 (68 aa).

This sequence belongs to the bacterial ribosomal protein bL35 family.

The polypeptide is Large ribosomal subunit protein bL35 (Rickettsia bellii (strain RML369-C)).